A 1345-amino-acid polypeptide reads, in one-letter code: Vascular endothelial growth factor receptor 2 (1345 aa).

Positions 1 to 19 (MESKALLAVALWFCVETRA) are cleaved as a signal peptide. The Extracellular portion of the chain corresponds to 20–762 (ASVGLPGDFL…EGAQEKTNLE (743 aa)). N-linked (GlcNAc...) asparagine glycosylation is found at asparagine 46, asparagine 98, asparagine 145, asparagine 160, and asparagine 247. Ig-like C2-type domains lie at 46–111 (NTTL…RDVD), 143–209 (NKNK…INDE), 226–325 (YDVI…TFVR), 330–416 (PFIA…HMVS), 423–542 (PQIG…RVIS), 549–656 (PEIT…LVKQ), and 665–751 (PMIT…TLFI). A disulfide bridge links cysteine 53 with cysteine 105. An intrachain disulfide couples cysteine 152 to cysteine 202. Residues cysteine 248 and cysteine 309 are joined by a disulfide bond. N-linked (GlcNAc...) asparagine glycosylation is found at asparagine 320, asparagine 376, asparagine 397, asparagine 509, asparagine 521, asparagine 578, asparagine 611, asparagine 617, asparagine 629, asparagine 673, asparagine 702, and asparagine 719. 2 disulfides stabilise this stretch: cysteine 447–cysteine 528 and cysteine 569–cysteine 640. An intrachain disulfide couples cysteine 686 to cysteine 735. Residues 763–783 (VIILVGTAVIAMFFWLLLVIV) form a helical membrane-spanning segment. Over 784 to 1345 (LRTVKRANEG…SGTTLRSPPV (562 aa)) the chain is Cytoplasmic. A Phosphotyrosine modification is found at tyrosine 799. One can recognise a Protein kinase domain in the interval 832–1160 (LKLGKPLGRG…FSELVEHLGN (329 aa)). Residues 838-846 (LGRGAFGQV) and lysine 866 each bind ATP. Tyrosine 949 carries the phosphotyrosine; by autocatalysis modification. Phosphoserine occurs at positions 980 and 982. Tyrosine 994 bears the Phosphotyrosine; by autocatalysis mark. A disulfide bond links cysteine 1022 and cysteine 1043. Aspartate 1026 (proton acceptor) is an active-site residue. 4 positions are modified to phosphotyrosine; by autocatalysis: tyrosine 1052, tyrosine 1057, tyrosine 1173, and tyrosine 1212. Phosphoserine occurs at positions 1229 and 1233. Threonine 1236 is modified (phosphothreonine). The tract at residues 1272 to 1316 (DRNKLSPSFGGMMPSKSRESVASEGSNQTSGYQSGYHSDDTDTTV) is disordered. A compositionally biased stretch (polar residues) spans 1294-1307 (SEGSNQTSGYQSGY). Phosphotyrosine; by autocatalysis is present on residues tyrosine 1303, tyrosine 1307, and tyrosine 1317.

The protein belongs to the protein kinase superfamily. Tyr protein kinase family. CSF-1/PDGF receptor subfamily. Homodimer in the presence of bound dimeric VEGFA, VEGFC or VEGFD ligands; monomeric in the absence of bound ligands. Can also form heterodimers with FLT1/VEGFR1 and KDR/VEGFR2. Interacts (tyrosine phosphorylated) with LFYN, NCK1, PLCG1. Interacts (tyrosine-phosphorylated active form preferentially) with DAB2IP (via C2 domain and active form preferentially); the interaction occurs at the late phase of VEGFA response and inhibits KDR/VEGFR2 activity. Interacts with SHBSH2D2A/TSAD, GRB2, MYOF, CBL and PDCD6. Interacts (via C-terminus domain) with ERN1 (via kinase domain); the interaction is facilitated in a XBP1 isoform 1- and vascular endothelial growth factor (VEGF)-dependent manner in endothelial cells. Interacts (via juxtamembrane region) with chaperone PDCL3 (via thioredoxin fold region); the interaction leads to increased KDR/VEGFR2 abundance through inhibition of its ubiquitination and degradation. Interacts (tyrosine phosphorylated) with CCDC88A/GIV (via SH2-like region); binding requires autophosphorylation of the KDR/VEGFR2 C-terminal region. Interacts with isoform 2 of BSG. Interacts with SLC31A1; this interaction is induced upon VEGFA stimulation leading to SLC31A1 and KDR subsequent co-internalization to early endosomes, thereby activating KDR downstream signaling in endothelial cells. Post-translationally, N-glycosylated. Ubiquitinated. Tyrosine phosphorylation of the receptor promotes its poly-ubiquitination, leading to its degradation via the proteasome or lysosomal proteases. In terms of processing, autophosphorylated on tyrosine residues upon ligand binding. Autophosphorylation occurs in trans, i.e. one subunit of the dimeric receptor phosphorylates tyrosine residues on the other subunit. Phosphorylation at Tyr-949 is important for interaction with SH2D2A/TSAD and VEGFA-mediated reorganization of the actin cytoskeleton. Phosphorylation at Tyr-1173 is important for interaction with PLCG1 and SHB. Phosphorylation at Tyr-1212 is important for interaction with NCK1 and FYN. Dephosphorylated by PTPRJ at Tyr-799, Tyr-949, Tyr-994, Tyr-1052, Tyr-1057, Tyr-1173 and Tyr-1212. Post-translationally, the inhibitory disulfide bond between Cys-1022 and Cys-1043 may serve as a specific molecular switch for H(2)S-induced modification that regulates KDR/VEGFR2 function. Expressed in endothelial cells (at protein level). Detected in embryonic endothelial cells, as well as hematopoietic stem and progenitor cells. Detected in vascular endothelium. Expressed at high levels in adult heart, lung, kidney, brain and skeletal muscle, but is also expressed at lower levels in most other adult tissues.

Its subcellular location is the cell junction. It is found in the endoplasmic reticulum. The protein localises to the cell membrane. It localises to the cytoplasm. The protein resides in the nucleus. Its subcellular location is the cytoplasmic vesicle. It is found in the early endosome. The protein localises to the secreted. The catalysed reaction is L-tyrosyl-[protein] + ATP = O-phospho-L-tyrosyl-[protein] + ADP + H(+). With respect to regulation, present in an inactive conformation in the absence of bound ligand. Binding of VEGFA, VEGFC or VEGFD leads to dimerization and activation by autophosphorylation on tyrosine residues. May be regulated by hydrogen sulfide (H(2)S) levels via a sensitive intracellular disulfide bond. In terms of biological role, tyrosine-protein kinase that acts as a cell-surface receptor for VEGFA, VEGFC and VEGFD. Plays an essential role in the regulation of angiogenesis, vascular development, vascular permeability, and embryonic hematopoiesis. Promotes proliferation, survival, migration and differentiation of endothelial cells. Promotes reorganization of the actin cytoskeleton. Isoforms lacking a transmembrane domain, such as isoform 2, may function as decoy receptors for VEGFA, VEGFC and/or VEGFD. Isoform 2 plays an important role as a negative regulator of VEGFA- and VEGFC-mediated lymphangiogenesis by limiting the amount of free VEGFA and/or VEGFC and by preventing their binding to FLT4. Modulates FLT1 and FLT4 signaling by forming heterodimers. Binding of vascular growth factors to isoform 1 leads to the activation of several signaling cascades. Activation of PLCG1 leads to the production of the cellular signaling molecules diacylglycerol and inositol 1,4,5-trisphosphate and the activation of protein kinase C. Mediates activation of MAPK1/ERK2, MAPK3/ERK1 and the MAP kinase signaling pathway, as well as of the AKT1 signaling pathway. Mediates phosphorylation of PIK3R1, the regulatory subunit of phosphatidylinositol 3-kinase, reorganization of the actin cytoskeleton and activation of PTK2/FAK1. Required for VEGFA-mediated induction of NOS2 and NOS3, leading to the production of the signaling molecule nitric oxide (NO) by endothelial cells. Phosphorylates PLCG1. Promotes phosphorylation of FYN, NCK1, NOS3, PIK3R1, PTK2/FAK1 and SRC. This chain is Vascular endothelial growth factor receptor 2, found in Mus musculus (Mouse).